The sequence spans 407 residues: Probable tRNA sulfurtransferase (407 aa).

The THUMP domain occupies 61-165 (NEITNRLSKI…LDAIYMYEEV (105 aa)). ATP-binding positions include 183–184 (ML), 208–209 (HF), R265, G287, and Q296.

This sequence belongs to the ThiI family.

The protein resides in the cytoplasm. The enzyme catalyses [ThiI sulfur-carrier protein]-S-sulfanyl-L-cysteine + a uridine in tRNA + 2 reduced [2Fe-2S]-[ferredoxin] + ATP + H(+) = [ThiI sulfur-carrier protein]-L-cysteine + a 4-thiouridine in tRNA + 2 oxidized [2Fe-2S]-[ferredoxin] + AMP + diphosphate. It carries out the reaction [ThiS sulfur-carrier protein]-C-terminal Gly-Gly-AMP + S-sulfanyl-L-cysteinyl-[cysteine desulfurase] + AH2 = [ThiS sulfur-carrier protein]-C-terminal-Gly-aminoethanethioate + L-cysteinyl-[cysteine desulfurase] + A + AMP + 2 H(+). The protein operates within cofactor biosynthesis; thiamine diphosphate biosynthesis. Catalyzes the ATP-dependent transfer of a sulfur to tRNA to produce 4-thiouridine in position 8 of tRNAs, which functions as a near-UV photosensor. Also catalyzes the transfer of sulfur to the sulfur carrier protein ThiS, forming ThiS-thiocarboxylate. This is a step in the synthesis of thiazole, in the thiamine biosynthesis pathway. The sulfur is donated as persulfide by IscS. The protein is Probable tRNA sulfurtransferase of Staphylococcus aureus (strain MRSA252).